A 761-amino-acid chain; its full sequence is Copper-exporting P-type ATPase (761 aa).

Thr-2 is modified (N-acetylthreonine). The HMA domain occupies 14–78 (QRIQLRISGM…AVRRAGYQAD (65 aa)). Residues Cys-25 and Cys-28 each coordinate Cu(+). 6 helical membrane passes run 102–122 (LAIA…FGVV), 129–149 (GWQW…AWPF), 164–184 (METL…YTVF), 199–219 (LLGS…FVLV), 361–381 (VFVP…LIAG), and 387–407 (AVSA…GLAT). Asp-443 serves as the catalytic 4-aspartylphosphate intermediate. Transmembrane regions (helical) follow at residues 695-714 (MVWA…AGLL) and 718-735 (VAGA…SNSL).

It belongs to the cation transport ATPase (P-type) (TC 3.A.3) family. Type IB subfamily.

The protein localises to the cell membrane. It catalyses the reaction Cu(+)(in) + ATP + H2O = Cu(+)(out) + ADP + phosphate + H(+). Its activity is regulated as follows. ATPase activity is stimulated by Cu(+) ions. Involved in copper export. Could be involved in the copper detoxification of mycobacterial cells. In Mycobacterium tuberculosis (strain ATCC 25618 / H37Rv), this protein is Copper-exporting P-type ATPase (ctpA).